Reading from the N-terminus, the 150-residue chain is Transthyretin (150 aa).

Residues 1-20 (MAFHSMLLVFLAGLVFLTEA) form the signal peptide. Cys-33 carries the post-translational modification Sulfocysteine. Residues Lys-38, Glu-77, and Ser-140 each contribute to the L-thyroxine site.

The protein belongs to the transthyretin family. Homotetramer. Dimer of dimers. In the homotetramer, subunits assemble around a central channel that can accommodate two ligand molecules. Interacts with RBP4. Sulfonation of the reactive cysteine Cys-33 enhances the stability of the native conformation of TTR, avoiding misassembly of the protein leading to amyloid formation. In terms of tissue distribution, strongly expressed in the brain, and to a lesser extent in the eye.

Its subcellular location is the secreted. Thyroid hormone-binding protein, with a much higher binding affinity for triiodothyronine (T3) than for thyroxine (T4). Probably transports triiodothyronine from the bloodstream to the brain. The chain is Transthyretin (TTR) from Crocodylus porosus (Saltwater crocodile).